Here is a 1026-residue protein sequence, read N- to C-terminus: Phosphoenolpyruvate carboxylase (1026 aa).

Active-site residues include His199 and Lys672.

It belongs to the PEPCase type 1 family. Mg(2+) serves as cofactor.

It catalyses the reaction oxaloacetate + phosphate = phosphoenolpyruvate + hydrogencarbonate. Its function is as follows. Forms oxaloacetate, a four-carbon dicarboxylic acid source for the tricarboxylic acid cycle. The sequence is that of Phosphoenolpyruvate carboxylase (ppc) from Nostoc sp. (strain PCC 7120 / SAG 25.82 / UTEX 2576).